Here is a 107-residue protein sequence, read N- to C-terminus: NADH-quinone oxidoreductase subunit K (107 aa).

A run of 3 helical transmembrane segments spans residues 9 to 29 (IGVNHFLTISVILFGLGMFAV), 36 to 56 (IVILMGVELILNAANINFLTF), and 68 to 88 (FSLFVIVLAAAEAAIALAIVI).

Belongs to the complex I subunit 4L family. In terms of assembly, NDH-1 is composed of 14 different subunits. Subunits NuoA, H, J, K, L, M, N constitute the membrane sector of the complex.

It localises to the cell inner membrane. The catalysed reaction is a quinone + NADH + 5 H(+)(in) = a quinol + NAD(+) + 4 H(+)(out). NDH-1 shuttles electrons from NADH, via FMN and iron-sulfur (Fe-S) centers, to quinones in the respiratory chain. The immediate electron acceptor for the enzyme in this species is believed to be a menaquinone. Couples the redox reaction to proton translocation (for every two electrons transferred, four hydrogen ions are translocated across the cytoplasmic membrane), and thus conserves the redox energy in a proton gradient. This chain is NADH-quinone oxidoreductase subunit K, found in Chlorobaculum tepidum (strain ATCC 49652 / DSM 12025 / NBRC 103806 / TLS) (Chlorobium tepidum).